Reading from the N-terminus, the 382-residue chain is Dual-specificity RNA methyltransferase RlmN (382 aa).

The active-site Proton acceptor is Glu94. A Radical SAM core domain is found at 100–336 (EANRGTLCVS…NTITRKTRGD (237 aa)). Residues Cys107 and Cys342 are joined by a disulfide bond. [4Fe-4S] cluster-binding residues include Cys114, Cys118, and Cys121. S-adenosyl-L-methionine-binding positions include 168–169 (GE), Ser200, 222–224 (SLH), and Asn299. Cys342 functions as the S-methylcysteine intermediate in the catalytic mechanism.

It belongs to the radical SAM superfamily. RlmN family. The cofactor is [4Fe-4S] cluster.

The protein resides in the cytoplasm. The catalysed reaction is adenosine(2503) in 23S rRNA + 2 reduced [2Fe-2S]-[ferredoxin] + 2 S-adenosyl-L-methionine = 2-methyladenosine(2503) in 23S rRNA + 5'-deoxyadenosine + L-methionine + 2 oxidized [2Fe-2S]-[ferredoxin] + S-adenosyl-L-homocysteine. The enzyme catalyses adenosine(37) in tRNA + 2 reduced [2Fe-2S]-[ferredoxin] + 2 S-adenosyl-L-methionine = 2-methyladenosine(37) in tRNA + 5'-deoxyadenosine + L-methionine + 2 oxidized [2Fe-2S]-[ferredoxin] + S-adenosyl-L-homocysteine. In terms of biological role, specifically methylates position 2 of adenine 2503 in 23S rRNA and position 2 of adenine 37 in tRNAs. m2A2503 modification seems to play a crucial role in the proofreading step occurring at the peptidyl transferase center and thus would serve to optimize ribosomal fidelity. The chain is Dual-specificity RNA methyltransferase RlmN from Legionella pneumophila (strain Paris).